The sequence spans 267 residues: tRNA pseudouridine synthase A (267 aa).

Residue D55 is the Nucleophile of the active site. Y111 contributes to the substrate binding site.

Belongs to the tRNA pseudouridine synthase TruA family.

It carries out the reaction uridine(38/39/40) in tRNA = pseudouridine(38/39/40) in tRNA. In terms of biological role, formation of pseudouridine at positions 38, 39 and 40 in the anticodon stem and loop of transfer RNAs. This Thermococcus kodakarensis (strain ATCC BAA-918 / JCM 12380 / KOD1) (Pyrococcus kodakaraensis (strain KOD1)) protein is tRNA pseudouridine synthase A.